Reading from the N-terminus, the 74-residue chain is Kappa-scoloptoxin(03)-Ssm1a (74 aa).

Residues 1–23 (MNSSIAILLVMALIMFSLDKSYS) form the signal peptide. 3 disulfides stabilise this stretch: Cys-32-Cys-59, Cys-42-Cys-58, and Cys-45-Cys-68.

Belongs to the scoloptoxin-03 family. In terms of tissue distribution, expressed by the venom gland.

The protein resides in the secreted. Its function is as follows. This toxin inhibits voltage-gated potassium channel currents in DRG neurons (IC(50)=44.2 nM). In vivo, insects injected with this toxin showed signs of neurotoxicity including twitching, paralysis, and body contraction. This Scolopendra mutilans (Chinese red-headed centipede) protein is Kappa-scoloptoxin(03)-Ssm1a.